The following is a 204-amino-acid chain: NADH-quinone oxidoreductase subunit C (204 aa).

It belongs to the complex I 30 kDa subunit family. In terms of assembly, NDH-1 is composed of 14 different subunits. Subunits NuoB, C, D, E, F, and G constitute the peripheral sector of the complex.

The protein resides in the cell inner membrane. It carries out the reaction a quinone + NADH + 5 H(+)(in) = a quinol + NAD(+) + 4 H(+)(out). In terms of biological role, NDH-1 shuttles electrons from NADH, via FMN and iron-sulfur (Fe-S) centers, to quinones in the respiratory chain. The immediate electron acceptor for the enzyme in this species is believed to be ubiquinone. Couples the redox reaction to proton translocation (for every two electrons transferred, four hydrogen ions are translocated across the cytoplasmic membrane), and thus conserves the redox energy in a proton gradient. In Polaromonas naphthalenivorans (strain CJ2), this protein is NADH-quinone oxidoreductase subunit C.